A 215-amino-acid chain; its full sequence is Pyrophosphatase PpaX (215 aa).

Residue aspartate 9 is the Nucleophile of the active site.

It belongs to the HAD-like hydrolase superfamily. PpaX family. The cofactor is Mg(2+).

It carries out the reaction diphosphate + H2O = 2 phosphate + H(+). In terms of biological role, hydrolyzes pyrophosphate formed during P-Ser-HPr dephosphorylation by HPrK/P. Might play a role in controlling the intracellular pyrophosphate pool. The polypeptide is Pyrophosphatase PpaX (Bacillus mycoides (strain KBAB4) (Bacillus weihenstephanensis)).